We begin with the raw amino-acid sequence, 291 residues long: Tyrosine recombinase XerA (291 aa).

Residues 9–102 (PESGDLYNAF…AVRRFLKWIN (94 aa)) enclose the Core-binding (CB) domain. In terms of domain architecture, Tyr recombinase spans 115–279 (KEVKALDEIQ…VLDDLRNEYL (165 aa)). Active-site residues include Arg-150, Lys-175, His-231, Arg-234, and His-257. Tyr-266 acts as the O-(3'-phospho-DNA)-tyrosine intermediate in catalysis.

Belongs to the 'phage' integrase family. XerA subfamily.

It localises to the cytoplasm. Site-specific tyrosine recombinase, which acts by catalyzing the cutting and rejoining of the recombining DNA molecules. Probably involved in the resolution of chromosome dimers. Binds to the dif site. This is Tyrosine recombinase XerA from Saccharolobus solfataricus (strain ATCC 35092 / DSM 1617 / JCM 11322 / P2) (Sulfolobus solfataricus).